A 568-amino-acid polypeptide reads, in one-letter code: MSGGGSSSGPRSKDRNLNGRSAQYDEVPADPRHPETNLETLHDRDLALSADPLPPPPLPLHPPFGAEFYPSDSEEPVTTLELRPVRRFIPDSWKNIFKGKKENPWENPMTEINYTSGGVPCSPPRSPSLPASEPHGKNLAGDSKTVASSYRDPYGGSGGSYNSRREEEAMLPHDPYGSLGRQTQTVKTYSERVEEYNMRYAYMKSWAGLLRILCIVELLLGAAVFACVTAYIHKDNEWYNMFGYSQPYGYTASMQGGYYYSGPKTPFVLVVAGLAWIVTIILLVLGMSMYYRTILLDSTWWPLTEFGINISLFILYMAGAIVYVNDTNRGGLCYYQLFNTPVNASFCRVEGGQTAAIIFLFVSMLMYFISAMVSLKLWRHESARKRREFLGQEMNPNQISPPKVMREVALGNGHMIDVPDQQRDMRKVEMKPELLSGYIPAGHIPKPIVMPDYVAKYQAIKAEDERERYKAVFNDQFAEYKELHAEVQAVMKKFSELDAVMQKLPRNPENQHEYERIAKVLQEYQKKKNEPTFLEKKERCEYLKNKLSHIKQRIQEYDKVMDWNDGYN.

2 disordered regions span residues 1–72 and 116–163; these read MSGG…YPSD and SGGV…SYNS. Over 1-211 the chain is Cytoplasmic; the sequence is MSGGGSSSGP…YMKSWAGLLR (211 aa). Residues 29-46 are compositionally biased toward basic and acidic residues; it reads ADPRHPETNLETLHDRDL. Over residues 52 to 62 the composition is skewed to pro residues; the sequence is PLPPPPLPLHP. Positions 205–379 constitute an MARVEL domain; the sequence is SWAGLLRILC…SAMVSLKLWR (175 aa). Residues 212-232 traverse the membrane as a helical segment; that stretch reads ILCIVELLLGAAVFACVTAYI. Over 233-266 the chain is Extracellular; that stretch reads HKDNEWYNMFGYSQPYGYTASMQGGYYYSGPKTP. Residues 267 to 287 form a helical membrane-spanning segment; sequence FVLVVAGLAWIVTIILLVLGM. At 288-303 the chain is on the cytoplasmic side; it reads SMYYRTILLDSTWWPL. A helical transmembrane segment spans residues 304–324; sequence TEFGINISLFILYMAGAIVYV. Over 325–354 the chain is Extracellular; it reads NDTNRGGLCYYQLFNTPVNASFCRVEGGQT. Residues 355 to 375 form a helical membrane-spanning segment; the sequence is AAIIFLFVSMLMYFISAMVSL. Residues 376–568 are Cytoplasmic-facing; that stretch reads KLWRHESARK…KVMDWNDGYN (193 aa). The region spanning 451-562 is the OCEL domain; the sequence is PDYVAKYQAI…RIQEYDKVMD (112 aa). A coiled-coil region spans residues 462–559; sequence AEDERERYKA…IKQRIQEYDK (98 aa).

This sequence belongs to the ELL/occludin family.

Its subcellular location is the cell membrane. The protein localises to the cell junction. It is found in the tight junction. Functionally, may play a role in the formation of the epithelial barrier. This is MARVEL domain-containing protein 2 (marveld2) from Xenopus tropicalis (Western clawed frog).